The sequence spans 358 residues: 3-dehydroquinate synthase (358 aa).

NAD(+)-binding positions include 102 to 106 (GVVGD), 126 to 127 (TT), Lys138, and Lys147. Residues Glu180, His243, and His260 each contribute to the Zn(2+) site.

It belongs to the sugar phosphate cyclases superfamily. Dehydroquinate synthase family. Requires Co(2+) as cofactor. It depends on Zn(2+) as a cofactor. NAD(+) is required as a cofactor.

It localises to the cytoplasm. The catalysed reaction is 7-phospho-2-dehydro-3-deoxy-D-arabino-heptonate = 3-dehydroquinate + phosphate. The protein operates within metabolic intermediate biosynthesis; chorismate biosynthesis; chorismate from D-erythrose 4-phosphate and phosphoenolpyruvate: step 2/7. Its function is as follows. Catalyzes the conversion of 3-deoxy-D-arabino-heptulosonate 7-phosphate (DAHP) to dehydroquinate (DHQ). This chain is 3-dehydroquinate synthase, found in Shouchella clausii (strain KSM-K16) (Alkalihalobacillus clausii).